Reading from the N-terminus, the 142-residue chain is 3-hydroxyacyl-[acyl-carrier-protein] dehydratase FabZ (142 aa).

His47 is a catalytic residue.

It belongs to the thioester dehydratase family. FabZ subfamily.

It is found in the cytoplasm. It catalyses the reaction a (3R)-hydroxyacyl-[ACP] = a (2E)-enoyl-[ACP] + H2O. Functionally, involved in unsaturated fatty acids biosynthesis. Catalyzes the dehydration of short chain beta-hydroxyacyl-ACPs and long chain saturated and unsaturated beta-hydroxyacyl-ACPs. The chain is 3-hydroxyacyl-[acyl-carrier-protein] dehydratase FabZ from Thermoanaerobacter pseudethanolicus (strain ATCC 33223 / 39E) (Clostridium thermohydrosulfuricum).